A 437-amino-acid polypeptide reads, in one-letter code: Beta-1,3-galactosyl-O-glycosyl-glycoprotein beta-1,6-N-acetylglucosaminyltransferase 3 (437 aa).

Topologically, residues methionine 1–arginine 12 are cytoplasmic. A helical; Signal-anchor for type II membrane protein membrane pass occupies residues leucine 13–serine 30. The Lumenal portion of the chain corresponds to leucine 31 to leucine 437. Intrachain disulfides connect cysteine 70–cysteine 227, cysteine 161–cysteine 381, cysteine 182–cysteine 209, and cysteine 390–cysteine 422. The N-linked (GlcNAc...) asparagine glycan is linked to asparagine 288.

It belongs to the glycosyltransferase 14 family. Post-translationally, N-glycosylated.

It localises to the golgi apparatus membrane. It carries out the reaction a 3-O-[beta-D-galactosyl-(1-&gt;3)-N-acetyl-alpha-D-galactosaminyl]-L-seryl-[protein] + UDP-N-acetyl-alpha-D-glucosamine = 3-O-{beta-D-galactosyl-(1-&gt;3)-[N-acetyl-beta-D-glucosaminyl-(1-&gt;6)]-N-acetyl-alpha-D-galactosaminyl}-L-seryl-[protein] + UDP + H(+). The enzyme catalyses a 3-O-[beta-D-galactosyl-(1-&gt;3)-N-acetyl-alpha-D-galactosaminyl]-L-threonyl-[protein] + UDP-N-acetyl-alpha-D-glucosamine = a 3-O-{beta-D-galactosyl-(1-&gt;3)-[N-acetyl-beta-D-glucosaminyl-(1-&gt;6)]-N-acetyl-alpha-D-galactosaminyl}-L-threonyl-[protein] + UDP + H(+). It catalyses the reaction a beta-D-Gal-(1-&gt;4)-beta-D-GlcNAc-(1-&gt;3)-beta-D-Gal-(1-&gt;4)-beta-D-GlcNAc derivative + UDP-N-acetyl-alpha-D-glucosamine = a beta-D-Gal-(1-&gt;4)-beta-D-GlcNAc-(1-&gt;3)-[beta-D-GlcNAc-(1-&gt;6)]-beta-D-Gal-(1-&gt;4)-N-acetyl-beta-D-glucosaminyl derivative + UDP + H(+). The catalysed reaction is 3-O-[N-acetyl-beta-D-glucosaminyl-(1-&gt;3)-N-acetyl-alpha-D-galactosaminyl]-L-seryl-[protein] + UDP-N-acetyl-alpha-D-glucosamine = 3-O-[N-acetyl-beta-D-glucosaminyl-(1-&gt;3)-[N-acetyl-beta-D-glucosaminyl-(1-&gt;6)]-N-acetyl-alpha-D-galactosaminyl]-L-seryl-[protein] + UDP + H(+). It carries out the reaction a 3-O-[N-acetyl-beta-D-glucosaminyl-(1-&gt;3)-N-acetyl-alpha-D-galactosaminyl]-L-threonyl-[protein] + UDP-N-acetyl-alpha-D-glucosamine = 3-O-[N-acetyl-beta-D-glucosaminyl-(1-&gt;3)-[N-acetyl-beta-D-glucosaminyl-(1-&gt;6)]-N-acetyl-alpha-D-galactosaminyl]-L-threonyl-[protein] + UDP + H(+). It functions in the pathway protein modification; protein glycosylation. Its function is as follows. Glycosyltransferase that can synthesize all known mucin beta 6 N-acetylglucosaminides. Mediates core 2 and core 4 O-glycan branching, 2 important steps in mucin-type biosynthesis. Also has I-branching enzyme activity by converting linear into branched poly-N-acetyllactosaminoglycans, leading to introduce the blood group I antigen during embryonic development. In Mus musculus (Mouse), this protein is Beta-1,3-galactosyl-O-glycosyl-glycoprotein beta-1,6-N-acetylglucosaminyltransferase 3 (Gcnt3).